Reading from the N-terminus, the 338-residue chain is Glycerol-3-phosphate dehydrogenase [NAD(P)+] (338 aa).

Positions 12, 13, and 110 each coordinate NADPH. Residues lysine 110, glycine 141, and serine 143 each coordinate sn-glycerol 3-phosphate. Alanine 145 contacts NADPH. Sn-glycerol 3-phosphate contacts are provided by lysine 196, aspartate 249, serine 259, arginine 260, and asparagine 261. The Proton acceptor role is filled by lysine 196. Arginine 260 is an NADPH binding site. 2 residues coordinate NADPH: valine 284 and glutamate 286.

This sequence belongs to the NAD-dependent glycerol-3-phosphate dehydrogenase family.

It is found in the cytoplasm. The catalysed reaction is sn-glycerol 3-phosphate + NAD(+) = dihydroxyacetone phosphate + NADH + H(+). It catalyses the reaction sn-glycerol 3-phosphate + NADP(+) = dihydroxyacetone phosphate + NADPH + H(+). It participates in membrane lipid metabolism; glycerophospholipid metabolism. Its function is as follows. Catalyzes the reduction of the glycolytic intermediate dihydroxyacetone phosphate (DHAP) to sn-glycerol 3-phosphate (G3P), the key precursor for phospholipid synthesis. This is Glycerol-3-phosphate dehydrogenase [NAD(P)+] from Pediococcus pentosaceus (strain ATCC 25745 / CCUG 21536 / LMG 10740 / 183-1w).